A 225-amino-acid polypeptide reads, in one-letter code: PKHD-type hydroxylase YbiX (225 aa).

The 100-residue stretch at 78–177 (TLSTPLFNRY…RVASFMWIQS (100 aa)) folds into the Fe2OG dioxygenase domain. Fe cation-binding residues include His-96, Asp-98, and His-158. Position 168 (Arg-168) interacts with 2-oxoglutarate.

The cofactor is Fe(2+). It depends on L-ascorbate as a cofactor.

The sequence is that of PKHD-type hydroxylase YbiX from Shigella dysenteriae serotype 1 (strain Sd197).